Here is a 209-residue protein sequence, read N- to C-terminus: Thiamine-phosphate synthase (209 aa).

4-amino-2-methyl-5-(diphosphooxymethyl)pyrimidine-binding positions include 36-40 and Asn68; that span reads QYRDK. The Mg(2+) site is built by Asp69 and Asp87. Residue Thr106 participates in 4-amino-2-methyl-5-(diphosphooxymethyl)pyrimidine binding. 133–135 contacts 2-[(2R,5Z)-2-carboxy-4-methylthiazol-5(2H)-ylidene]ethyl phosphate; sequence SST. Lys136 contacts 4-amino-2-methyl-5-(diphosphooxymethyl)pyrimidine. Residue Gly163 participates in 2-[(2R,5Z)-2-carboxy-4-methylthiazol-5(2H)-ylidene]ethyl phosphate binding.

It belongs to the thiamine-phosphate synthase family. Mg(2+) serves as cofactor.

The enzyme catalyses 2-[(2R,5Z)-2-carboxy-4-methylthiazol-5(2H)-ylidene]ethyl phosphate + 4-amino-2-methyl-5-(diphosphooxymethyl)pyrimidine + 2 H(+) = thiamine phosphate + CO2 + diphosphate. It catalyses the reaction 2-(2-carboxy-4-methylthiazol-5-yl)ethyl phosphate + 4-amino-2-methyl-5-(diphosphooxymethyl)pyrimidine + 2 H(+) = thiamine phosphate + CO2 + diphosphate. The catalysed reaction is 4-methyl-5-(2-phosphooxyethyl)-thiazole + 4-amino-2-methyl-5-(diphosphooxymethyl)pyrimidine + H(+) = thiamine phosphate + diphosphate. The protein operates within cofactor biosynthesis; thiamine diphosphate biosynthesis; thiamine phosphate from 4-amino-2-methyl-5-diphosphomethylpyrimidine and 4-methyl-5-(2-phosphoethyl)-thiazole: step 1/1. Condenses 4-methyl-5-(beta-hydroxyethyl)thiazole monophosphate (THZ-P) and 2-methyl-4-amino-5-hydroxymethyl pyrimidine pyrophosphate (HMP-PP) to form thiamine monophosphate (TMP). The protein is Thiamine-phosphate synthase of Pseudomonas aeruginosa (strain LESB58).